A 312-amino-acid chain; its full sequence is Urease accessory protein UreD (312 aa).

This sequence belongs to the UreD family. As to quaternary structure, ureD, UreF and UreG form a complex that acts as a GTP-hydrolysis-dependent molecular chaperone, activating the urease apoprotein by helping to assemble the nickel containing metallocenter of UreC. The UreE protein probably delivers the nickel.

Its subcellular location is the cytoplasm. Functionally, required for maturation of urease via the functional incorporation of the urease nickel metallocenter. The protein is Urease accessory protein UreD of Marinomonas sp. (strain MWYL1).